Reading from the N-terminus, the 1054-residue chain is Desmoglein-1 (1054 aa).

The signal sequence occupies residues Met-1–Ser-23. A propeptide spanning residues Glu-24 to Arg-49 is cleaved from the precursor. N-linked (GlcNAc...) asparagine glycans are attached at residues Asn-36, Asn-110, and Asn-180. Cadherin domains follow at residues Glu-50–Phe-157, Ser-158–Met-269, Glu-270–Ser-389, and Arg-386–Glu-493. The Extracellular segment spans residues Glu-50–Pro-566. Residues Gly-487–Gly-554 form a disordered region. Over residues Thr-496–Asp-507 the composition is skewed to low complexity. The segment covering Ser-508–Arg-517 has biased composition (gly residues). A compositionally biased stretch (low complexity) spans Gly-523–Ser-534. Positions Thr-542 to Gly-554 are enriched in polar residues. Asn-557 carries an N-linked (GlcNAc...) asparagine glycan. Residues Ala-567 to Met-587 form a helical membrane-spanning segment. The Cytoplasmic segment spans residues Cys-588–Lys-1054. Desmoglein repeat repeat units follow at residues Thr-830 to Glu-856, Ser-857 to Val-886, Gly-887 to Ile-916, Ala-917 to Ile-944, and Arg-945 to Val-973. Residues Gly-1018–Ala-1040 form a disordered region. Polar residues predominate over residues Ser-1029–Ala-1040.

In terms of assembly, binds to JUP/plakoglobin. Interacts with PKP2. Interacts with DSC3; there is evidence to suggest that the interaction promotes cell-cell adhesion of keratinocytes.

The protein localises to the cell membrane. Its subcellular location is the cell junction. It localises to the desmosome. The protein resides in the cytoplasm. It is found in the nucleus. Its function is as follows. Component of intercellular desmosome junctions. Involved in the interaction of plaque proteins and intermediate filaments mediating cell-cell adhesion. This is Desmoglein-1 (DSG1) from Canis lupus familiaris (Dog).